The chain runs to 1770 residues: Transposon Ty2-OR2 Gag-Pol polyprotein (1770 aa).

Disordered regions lie at residues 1–88 (MESQ…YQQH) and 359–449 (QHSE…SNDE). Polar residues-rich tracts occupy residues 19–39 (ASVT…SASN) and 49–60 (KVNSQEETTPGT). The RNA-binding stretch occupies residues 295–397 (ENNINVSDRL…SSKPRAAKAH (103 aa)). A compositionally biased stretch (low complexity) spans 369-381 (TSPNTTNTKVTTR). 2 stretches are compositionally biased toward polar residues: residues 399–408 (IATSSKFSRV) and 415–435 (ESTV…GQQQ). The For protease activity; shared with dimeric partner role is filled by Asp457. An integrase-type zinc finger-like region spans residues 579–636 (NVNKSKSVNKYPYPLIHRMLGHANFRSIQKSLKKNAVTYLKESDIEWSNASTYQCPDC). In terms of domain architecture, Integrase catalytic spans 656–831 (ESYEPFQYLH…AGLDITTILP (176 aa)). Residues Asp667 and Asp732 each contribute to the Mg(2+) site. Disordered regions lie at residues 1005–1038 (GGTI…MIDL), 1057–1135 (GGTE…KSSK), 1146–1165 (LPLP…VSKD), and 1170–1205 (HSRQ…TEIE). Composition is skewed to polar residues over residues 1009–1024 (ESDT…FTAR) and 1065–1082 (QRNS…STPS). Residues 1151-1165 (LTHKSPTDTSDVSKD) show a composition bias toward basic and acidic residues. A Bipartite nuclear localization signal motif is present at residues 1193 to 1227 (KKRSLEDNETEIEVSRDTWNNKNMRSLEPPRSKKR). Positions 1353–1491 (NDYYITQLDI…DILGLEIKYQ (139 aa)) constitute a Reverse transcriptase Ty1/copia-type domain. Asp1361, Asp1442, Asp1443, Asp1625, Glu1667, and Asp1700 together coordinate Mg(2+). The RNase H Ty1/copia-type domain maps to 1625 to 1767 (DASYGNQPYY…IKTFKLLTNK (143 aa)).

In terms of assembly, the capsid protein forms a homotrimer, from which the VLPs are assembled. The protease is a homodimer, whose active site consists of two apposed aspartic acid residues. Post-translationally, initially, virus-like particles (VLPs) are composed of the structural unprocessed proteins Gag and Gag-Pol, and also contain the host initiator methionine tRNA (tRNA(i)-Met) which serves as a primer for minus-strand DNA synthesis, and a dimer of genomic Ty RNA. Processing of the polyproteins occurs within the particle and proceeds by an ordered pathway, called maturation. First, the protease (PR) is released by autocatalytic cleavage of the Gag-Pol polyprotein, and this cleavage is a prerequisite for subsequent processing at the remaining sites to release the mature structural and catalytic proteins. Maturation takes place prior to the RT reaction and is required to produce transposition-competent VLPs.

It localises to the cytoplasm. Its subcellular location is the nucleus. The catalysed reaction is DNA(n) + a 2'-deoxyribonucleoside 5'-triphosphate = DNA(n+1) + diphosphate. It catalyses the reaction Endonucleolytic cleavage to 5'-phosphomonoester.. Its function is as follows. Capsid protein (CA) is the structural component of the virus-like particle (VLP), forming the shell that encapsulates the retrotransposons dimeric RNA genome. The particles are assembled from trimer-clustered units and there are holes in the capsid shells that allow for the diffusion of macromolecules. CA also has nucleocapsid-like chaperone activity, promoting primer tRNA(i)-Met annealing to the multipartite primer-binding site (PBS), dimerization of Ty2 RNA and initiation of reverse transcription. The aspartyl protease (PR) mediates the proteolytic cleavages of the Gag and Gag-Pol polyproteins after assembly of the VLP. In terms of biological role, reverse transcriptase/ribonuclease H (RT) is a multifunctional enzyme that catalyzes the conversion of the retro-elements RNA genome into dsDNA within the VLP. The enzyme displays a DNA polymerase activity that can copy either DNA or RNA templates, and a ribonuclease H (RNase H) activity that cleaves the RNA strand of RNA-DNA heteroduplexes during plus-strand synthesis and hydrolyzes RNA primers. The conversion leads to a linear dsDNA copy of the retrotransposon that includes long terminal repeats (LTRs) at both ends. Functionally, integrase (IN) targets the VLP to the nucleus, where a subparticle preintegration complex (PIC) containing at least integrase and the newly synthesized dsDNA copy of the retrotransposon must transit the nuclear membrane. Once in the nucleus, integrase performs the integration of the dsDNA into the host genome. The polypeptide is Transposon Ty2-OR2 Gag-Pol polyprotein (TY2B-OR2) (Saccharomyces cerevisiae (strain ATCC 204508 / S288c) (Baker's yeast)).